The sequence spans 303 residues: Centromere protein O (303 aa).

A coiled-coil region spans residues 38-77; it reads AALRKNQELVLELRKKRDELKAKIERHKAEIQAFRGREEA.

Belongs to the CENP-O/MCM21 family.

The protein resides in the nucleus. The protein localises to the chromosome. It localises to the centromere. Functionally, probable component of a centromeric complex involved in assembly of kinetochore proteins, mitotic progression and chromosome segregation. The sequence is that of Centromere protein O (cenpo) from Xenopus tropicalis (Western clawed frog).